The following is a 478-amino-acid chain: Dynein regulatory complex subunit 4 (478 aa).

Basic residues predominate over residues 1-12 (MAPKKKGKKGKA). Residues 1 to 29 (MAPKKKGKKGKAKGTAIVDGVAPEDMTKE) form a disordered region. Positions 1-114 (MAPKKKGKKG…LLYEHQNNLA (114 aa)) are regulates microtubule-binding. Coiled coils occupy residues 24 to 207 (EDMT…RKTE) and 242 to 426 (LNNL…ELAR). The tract at residues 115-258 (EVKAEGTVVM…NSLKEQMEDM (144 aa)) is microtubule-binding. The interaction with SMO stretch occupies residues 357–478 (QQKTGFKNLL…GPAGLVGAPT (122 aa)).

The protein belongs to the DRC4 family. In terms of assembly, component of the nexin-dynein regulatory complex (N-DRC). Interacts with microtubules. Interacts with SMO. Interacts (via coiled-coil domains) with RAB3B (in GTP-bound form). Interacts with DRC1. Interacts with DRC7. Highly expressed in adult testes and lung. Weakly or not expressed in other tested tissues.

Its subcellular location is the cytoplasm. The protein localises to the cytoskeleton. It localises to the cell projection. The protein resides in the cilium. It is found in the flagellum. Its subcellular location is the cilium axoneme. The protein localises to the cilium basal body. It localises to the golgi apparatus. The protein resides in the flagellum axoneme. Functionally, component of the nexin-dynein regulatory complex (N-DRC), a key regulator of ciliary/flagellar motility which maintains the alignment and integrity of the distal axoneme and regulates microtubule sliding in motile axonemes. Plays an important role in the assembly of the N-DRC linker. Plays dual roles at both the primary (or non-motile) cilia to regulate hedgehog signaling and in motile cilia to coordinate cilia movement. Required for proper motile cilia functioning. Positively regulates ciliary smoothened (SMO)-dependent Hedgehog (Hh) signaling pathway by facilitating the trafficking of SMO into the cilium and the stimulation of SMO activity in a GRK2-dependent manner. May play a role in the spermatozoa motility. The protein is Dynein regulatory complex subunit 4 (Gas8) of Mus musculus (Mouse).